Consider the following 150-residue polypeptide: Ribonuclease K6 (150 aa).

Residues 1–23 form the signal peptide; the sequence is MVLCFPLLLLLLVLWGPVCLLHA. The active-site Proton acceptor is histidine 38. 4 disulfides stabilise this stretch: cysteine 46-cysteine 104, cysteine 60-cysteine 114, cysteine 78-cysteine 129, and cysteine 85-cysteine 92. Residue asparagine 55 is glycosylated (N-linked (GlcNAc...) asparagine). Residues 61–65 and lysine 86 contribute to the substrate site; that span reads KHQNT. Residue asparagine 100 is glycosylated (N-linked (GlcNAc...) asparagine). Substrate is bound at residue arginine 105. Residue histidine 145 is the Proton donor of the active site.

The protein belongs to the pancreatic ribonuclease family. Interacts (via N-terminus) with bacterial lipopolysaccharide (LPS).

The protein localises to the secreted. The protein resides in the lysosome. Its subcellular location is the cytoplasmic granule. Functionally, ribonuclease which shows a preference for the pyrimidines uridine and cytosine. Has potent antibacterial activity against a range of Gram-positive and Gram-negative bacteria, including P.aeruginosa, A.baumanii, M.luteus, S.aureus, E.faecalis, E.faecium, S.saprophyticus and E.coli. Causes loss of bacterial membrane integrity, and also promotes agglutination of Gram-negative bacteria. Probably contributes to urinary tract sterility. Bactericidal activity is independent of RNase activity. In Miopithecus talapoin (Angolan talapoin), this protein is Ribonuclease K6 (RNASE6).